The primary structure comprises 198 residues: A-type ATP synthase subunit E (198 aa).

It belongs to the V-ATPase E subunit family. In terms of assembly, has multiple subunits with at least A(3), B(3), C, D, E, F, H, I and proteolipid K(x).

It localises to the cell membrane. In terms of biological role, component of the A-type ATP synthase that produces ATP from ADP in the presence of a proton gradient across the membrane. This chain is A-type ATP synthase subunit E, found in Pyrococcus furiosus (strain ATCC 43587 / DSM 3638 / JCM 8422 / Vc1).